Here is a 111-residue protein sequence, read N- to C-terminus: uncharacterized protein (111 aa).

It localises to the cytoplasm. The protein resides in the nucleus. This is an uncharacterized protein from Saccharomyces cerevisiae (strain ATCC 204508 / S288c) (Baker's yeast).